The primary structure comprises 408 residues: Multidrug resistance protein MdtG (408 aa).

11 consecutive transmembrane segments (helical) span residues 16–36 (LIVAWLGCFLTGAAFSLVMPF), 58–78 (IVFSITFLFSAIASPFWGGLA), 92–112 (LGMGIVMVLMGLAQNIWQFLI), 115–135 (ALLGLLGGFVPNANALIATQV), 146–166 (TLSTGGVSGALLGPMAGGLLA), 173–193 (PVFFITASVLILCFFVTLFCI), 224–244 (LFVTTLIIQVATGSIAPILTL), 256–276 (VAFISGMIASVPGVAALLSAP), 290–310 (ILITALIFSVLLLIPMSYVQT), 319–339 (FLLGAADGALLPAVQTLLVYN), and 378–398 (AVFLVTAGVVLFNAVYSWNSL).

It belongs to the major facilitator superfamily. DHA1 family. MdtG (TC 2.A.1.2.20) subfamily.

It is found in the cell inner membrane. Its function is as follows. Confers resistance to fosfomycin and deoxycholate. This is Multidrug resistance protein MdtG from Escherichia coli O127:H6 (strain E2348/69 / EPEC).